A 202-amino-acid chain; its full sequence is Adenylyl-sulfate kinase (202 aa).

Position 31 to 38 (31 to 38 (GLSASGKS)) interacts with ATP. Serine 105 serves as the catalytic Phosphoserine intermediate.

The protein belongs to the APS kinase family.

It carries out the reaction adenosine 5'-phosphosulfate + ATP = 3'-phosphoadenylyl sulfate + ADP + H(+). The protein operates within sulfur metabolism; hydrogen sulfide biosynthesis; sulfite from sulfate: step 2/3. Functionally, catalyzes the synthesis of activated sulfate. The polypeptide is Adenylyl-sulfate kinase (MET14) (Saccharomyces pastorianus (Lager yeast)).